The chain runs to 236 residues: Ubiquinone biosynthesis O-methyltransferase (236 aa).

S-adenosyl-L-methionine contacts are provided by Arg36, Gly60, Asp81, and Leu123.

Belongs to the methyltransferase superfamily. UbiG/COQ3 family.

The catalysed reaction is a 3-demethylubiquinol + S-adenosyl-L-methionine = a ubiquinol + S-adenosyl-L-homocysteine + H(+). It catalyses the reaction a 3-(all-trans-polyprenyl)benzene-1,2-diol + S-adenosyl-L-methionine = a 2-methoxy-6-(all-trans-polyprenyl)phenol + S-adenosyl-L-homocysteine + H(+). It participates in cofactor biosynthesis; ubiquinone biosynthesis. Its function is as follows. O-methyltransferase that catalyzes the 2 O-methylation steps in the ubiquinone biosynthetic pathway. The chain is Ubiquinone biosynthesis O-methyltransferase from Rickettsia canadensis (strain McKiel).